The sequence spans 437 residues: UDP-N-acetylmuramate--L-alanine ligase (437 aa).

Residue 108 to 114 (GAHGKTS) coordinates ATP.

It belongs to the MurCDEF family.

The protein localises to the cytoplasm. The enzyme catalyses UDP-N-acetyl-alpha-D-muramate + L-alanine + ATP = UDP-N-acetyl-alpha-D-muramoyl-L-alanine + ADP + phosphate + H(+). Its pathway is cell wall biogenesis; peptidoglycan biosynthesis. Cell wall formation. The chain is UDP-N-acetylmuramate--L-alanine ligase from Staphylococcus aureus (strain JH9).